A 546-amino-acid chain; its full sequence is CTP synthase (546 aa).

The amidoligase domain stretch occupies residues 1-266; sequence MTTNYIFVTG…DDLVCQRFGI (266 aa). S14 lines the CTP pocket. S14 lines the UTP pocket. ATP-binding positions include 15-20 and D72; that span reads SLGKGI. Residues D72 and E140 each contribute to the Mg(2+) site. CTP contacts are provided by residues 147 to 149, 187 to 192, and K223; these read DIE and KTKPTQ. Residues 187 to 192 and K223 each bind UTP; that span reads KTKPTQ. 239 to 241 is an ATP binding site; the sequence is KDV. Residues 291–542 form the Glutamine amidotransferase type-1 domain; it reads VIGMVGKYIE…VKAAGESVRG (252 aa). Residue G352 participates in L-glutamine binding. C379 functions as the Nucleophile; for glutamine hydrolysis in the catalytic mechanism. L-glutamine contacts are provided by residues 380–383, E403, and R470; that span reads LGMQ. Residues H515 and E517 contribute to the active site.

The protein belongs to the CTP synthase family. In terms of assembly, homotetramer.

It catalyses the reaction UTP + L-glutamine + ATP + H2O = CTP + L-glutamate + ADP + phosphate + 2 H(+). It carries out the reaction L-glutamine + H2O = L-glutamate + NH4(+). The enzyme catalyses UTP + NH4(+) + ATP = CTP + ADP + phosphate + 2 H(+). It participates in pyrimidine metabolism; CTP biosynthesis via de novo pathway; CTP from UDP: step 2/2. With respect to regulation, allosterically activated by GTP, when glutamine is the substrate; GTP has no effect on the reaction when ammonia is the substrate. The allosteric effector GTP functions by stabilizing the protein conformation that binds the tetrahedral intermediate(s) formed during glutamine hydrolysis. Inhibited by the product CTP, via allosteric rather than competitive inhibition. Its function is as follows. Catalyzes the ATP-dependent amination of UTP to CTP with either L-glutamine or ammonia as the source of nitrogen. Regulates intracellular CTP levels through interactions with the four ribonucleotide triphosphates. In Aliivibrio fischeri (strain MJ11) (Vibrio fischeri), this protein is CTP synthase.